Here is a 350-residue protein sequence, read N- to C-terminus: Ferredoxin--NADP reductase (350 aa).

FAD-binding residues include threonine 14, aspartate 33, glutamine 41, tyrosine 46, alanine 86, phenylalanine 121, aspartate 286, and threonine 327.

Belongs to the ferredoxin--NADP reductase type 2 family. As to quaternary structure, homodimer. It depends on FAD as a cofactor.

The catalysed reaction is 2 reduced [2Fe-2S]-[ferredoxin] + NADP(+) + H(+) = 2 oxidized [2Fe-2S]-[ferredoxin] + NADPH. In Flavobacterium johnsoniae (strain ATCC 17061 / DSM 2064 / JCM 8514 / BCRC 14874 / CCUG 350202 / NBRC 14942 / NCIMB 11054 / UW101) (Cytophaga johnsonae), this protein is Ferredoxin--NADP reductase.